The primary structure comprises 487 residues: DNA-dependent metalloprotease SPRTN (487 aa).

Methionine 1 is modified (N-acetylmethionine). Positions 45 to 212 (LQGLFVLFND…KTCGGTYIKI (168 aa)) constitute a SprT-like domain. Residue histidine 111 coordinates Zn(2+). Residue glutamate 112 is part of the active site. Residues histidine 115 and histidine 130 each coordinate Zn(2+). A disordered region spans residues 219 to 248 (SKKGKGKTKLRKQPVSEAENKDKPNRGEKQ). Basic residues predominate over residues 220 to 230 (KKGKGKTKLRK). Lysine 230 carries the post-translational modification N6-acetyllysine. A compositionally biased stretch (basic and acidic residues) spans 236 to 247 (AENKDKPNRGEK). An SHP-box motif is present at residues 253-261 (FTGKGYVLG). Phosphoserine is present on serine 267. The segment covering 280–289 (SQEPLSQDHS) has biased composition (polar residues). The interval 280 to 317 (SQEPLSQDHSANALRPHSKTEVKFEQNGPSKKTSVASP) is disordered. Lysine 302 is covalently cross-linked (Glycyl lysine isopeptide (Lys-Gly) (interchain with G-Cter in SUMO2)). Residues 306–317 (NGPSKKTSVASP) show a composition bias toward polar residues. Positions 324–331 (QNVLSNYF) match the PIP-box motif. Lysine 340 is covalently cross-linked (Glycyl lysine isopeptide (Lys-Gly) (interchain with G-Cter in SUMO2); alternate). A Glycyl lysine isopeptide (Lys-Gly) (interchain with G-Cter in ubiquitin); alternate cross-link involves residue lysine 340. Positions 347–379 (GSPVKSLTVGDSTTKSVSAGSQRRVTSSRTSLR) are disordered. Serine 373 is subject to Phosphoserine. Residues 401–412 (GKLPSKRPRIED) carry the Nuclear localization signal motif. Residue lysine 413 forms a Glycyl lysine isopeptide (Lys-Gly) (interchain with G-Cter in ubiquitin) linkage. Residues lysine 422 and lysine 423 each participate in a glycyl lysine isopeptide (Lys-Gly) (interchain with G-Cter in SUMO2) cross-link. The interval 427–455 (QSGGGDVTSSSHPPAAAQSPSGASGQSRV) is disordered. Over residues 435 to 453 (SSSHPPAAAQSPSGASGQS) the composition is skewed to low complexity. A UBZ4-type zinc finger spans residues 455-482 (VVHCPVCQDEVSETQINEHLDWCLERDS). 4 residues coordinate Zn(2+): cysteine 458, cysteine 461, histidine 473, and cysteine 477. Lysine 486 participates in a covalent cross-link: Glycyl lysine isopeptide (Lys-Gly) (interchain with G-Cter in SUMO2).

Belongs to the Spartan family. In terms of assembly, homodimer. Interacts (VIA PIP-box) with PCNA (when ubiquitinated). Interacts (via its SHP-box) with VCP/p97. Interacts with RAD18. Interacts with KCTD13 and POLD3. Zn(2+) is required as a cofactor. In terms of processing, autocatalytically cleaved in response to double-stranded DNA-binding: autocatalytic cleavage takes place in trans and leads to inactivation. Post-translationally, monoubiquitinated; monoubiquitination promotes exclusion from chromatin. Deubiquitinated by VCPIP1: deubiquitination is required for subsequent acetylation and recruitment to chromatin and DNA damage sites. Acetylated following deubiquitination by VCPIP1, leading to recruitment to chromatin and DNA damage sites. In terms of processing, phosphorylation by CHEK1 promotes recruitment to chromatin.

The protein resides in the nucleus. It localises to the chromosome. DNA-binding activates the protease activity: single-stranded DNA-binding specifically activates ability to cleave covalent DNA-protein cross-links (DPCs). In contrast, double-stranded DNA-binding specifically activates autocatalytic cleavage, and subsequent inactivation. In terms of biological role, DNA-dependent metalloendopeptidase that mediates the proteolytic cleavage of covalent DNA-protein cross-links (DPCs) during DNA synthesis, thereby playing a key role in maintaining genomic integrity. DPCs are highly toxic DNA lesions that interfere with essential chromatin transactions, such as replication and transcription, and which are induced by reactive agents, such as UV light or formaldehyde. Associates with the DNA replication machinery and specifically removes DPCs during DNA synthesis. Catalyzes proteolytic cleavage of the HMCES DNA-protein cross-link following unfolding by the BRIP1/FANCJ helicase. Acts as a pleiotropic protease for DNA-binding proteins cross-linked with DNA, such as TOP1, TOP2A, histones H3 and H4. Mediates degradation of DPCs that are not ubiquitinated, while it is not able to degrade ubiquitinated DPCs. SPRTN activation requires polymerase collision with DPCs followed by helicase bypass of DPCs. Involved in recruitment of VCP/p97 to sites of DNA damage. Also acts as an activator of CHEK1 during normal DNA replication by mediating proteolytic cleavage of CHEK1, thereby promoting CHEK1 removal from chromatin and subsequent activation. Does not activate CHEK1 in response to DNA damage. May also act as a 'reader' of ubiquitinated PCNA: recruited to sites of UV damage and interacts with ubiquitinated PCNA and RAD18, the E3 ubiquitin ligase that monoubiquitinates PCNA. Facilitates chromatin association of RAD18 and is required for efficient PCNA monoubiquitination, promoting a feed-forward loop to enhance PCNA ubiquitination and translesion DNA synthesis. The protein is DNA-dependent metalloprotease SPRTN of Bos taurus (Bovine).